The following is a 226-amino-acid chain: 3-dehydroquinate dehydratase (226 aa).

Residues Ser21, 42 to 44 (EVR), and Arg70 each bind 3-dehydroquinate. His124 serves as the catalytic Proton donor/acceptor. Residue Lys149 is the Schiff-base intermediate with substrate of the active site. 3-dehydroquinate is bound by residues Arg187, Thr206, and Gln210.

Belongs to the type-I 3-dehydroquinase family. Homodimer.

The catalysed reaction is 3-dehydroquinate = 3-dehydroshikimate + H2O. It participates in metabolic intermediate biosynthesis; chorismate biosynthesis; chorismate from D-erythrose 4-phosphate and phosphoenolpyruvate: step 3/7. Functionally, involved in the third step of the chorismate pathway, which leads to the biosynthesis of aromatic amino acids. Catalyzes the cis-dehydration of 3-dehydroquinate (DHQ) and introduces the first double bond of the aromatic ring to yield 3-dehydroshikimate. This chain is 3-dehydroquinate dehydratase, found in Methanothrix thermoacetophila (strain DSM 6194 / JCM 14653 / NBRC 101360 / PT) (Methanosaeta thermophila).